Reading from the N-terminus, the 490-residue chain is N-succinylglutamate 5-semialdehyde dehydrogenase (490 aa).

223–228 is an NAD(+) binding site; the sequence is GSSRTG. Active-site residues include E246 and C280.

This sequence belongs to the aldehyde dehydrogenase family. AstD subfamily.

It carries out the reaction N-succinyl-L-glutamate 5-semialdehyde + NAD(+) + H2O = N-succinyl-L-glutamate + NADH + 2 H(+). It participates in amino-acid degradation; L-arginine degradation via AST pathway; L-glutamate and succinate from L-arginine: step 4/5. Functionally, catalyzes the NAD-dependent reduction of succinylglutamate semialdehyde into succinylglutamate. This chain is N-succinylglutamate 5-semialdehyde dehydrogenase, found in Pseudoalteromonas atlantica (strain T6c / ATCC BAA-1087).